A 564-amino-acid chain; its full sequence is Arginine--tRNA ligase (564 aa).

The short motif at Ala136–Asn146 is the 'HIGH' region element.

Belongs to the class-I aminoacyl-tRNA synthetase family. As to quaternary structure, monomer.

It is found in the cytoplasm. It catalyses the reaction tRNA(Arg) + L-arginine + ATP = L-arginyl-tRNA(Arg) + AMP + diphosphate. In Acetivibrio thermocellus (strain ATCC 27405 / DSM 1237 / JCM 9322 / NBRC 103400 / NCIMB 10682 / NRRL B-4536 / VPI 7372) (Clostridium thermocellum), this protein is Arginine--tRNA ligase.